The chain runs to 51 residues: Non-specific lipid-transfer protein (51 aa).

The protein belongs to the plant LTP family.

In terms of biological role, plant non-specific lipid-transfer proteins transfer phospholipids as well as galactolipids across membranes. May play a role in wax or cutin deposition in the cell walls of expanding epidermal cells and certain secretory tissues. This is Non-specific lipid-transfer protein from Lycium barbarum (Barbary matrimony-vine).